A 595-amino-acid polypeptide reads, in one-letter code: MEMYETLGKVGEGSYGTVMKCKHKDTGRIVAIKIFYEKPEKSVNKIATREIKFLKQFRHENLVNLIEVFRQKKKIHLVFEFIDHTVLDELQHYCHGLESKRLRKYLFQILRAIEYLHNNNIIHRDIKPENILVSQSGITKLCDFGFARTLAAPGDVYTDYVATRWYRAPELVLKDTSYGKPVDIWALGCMIIEMATGHPFLPSSSDLDLLHKIVLKVGNLTPHLHNIFSKSPIFAGVVLPQVQHPKTARKKYPKLNGLLADIVHACLQIDPAERTSSTDLLRHDYFTRDGFIEKFIPELRAKLLQEAKVNSFIKPKENFKENEPVRDEKKSVFTNTLLYGNPSLYGKEVDRDKRAKELKVRVIKAKGGKGDVPDQKKPEYEGDHRQQGTADDTQPSSLDKKPSVLELTNPLNPSENSDGVKEDPHAGGCMIMPPINLTSSNLLAANLSSNLSHPNSRLTERTKKRRTSSQTIGQTLSNSRQEDTGPTQVQTEKGAFNERTGQNDQISSGNKRKLNFPKCDRKEFHFPELPFTVQAKEMKGMEVKQIKVLKRESKKTDSSKIPTLLSMDPNQEKQEGGDGDCEGKNLKRNRFFFSR.

Residues Y4 to F286 form the Protein kinase domain. ATP-binding positions include V10–V18 and K33. The [NKR]KIAxRE motif lies at K45–I51. Residue D125 is the Proton acceptor of the active site. Position 158 is a phosphothreonine (T158). The residue at position 160 (Y160) is a Phosphotyrosine. Disordered regions lie at residues V362–G427, S448–K513, and R551–L586. Residues G368–Q386 show a composition bias toward basic and acidic residues. Residues Q387–S397 are compositionally biased toward polar residues. Residues S448–R457 show a composition bias toward low complexity. Composition is skewed to polar residues over residues S468–T491 and R499–G509. Residues N570 to N585 show a composition bias toward basic and acidic residues.

The protein belongs to the protein kinase superfamily. CMGC Ser/Thr protein kinase family. CDC2/CDKX subfamily.

Its subcellular location is the cytoplasm. It carries out the reaction L-seryl-[protein] + ATP = O-phospho-L-seryl-[protein] + ADP + H(+). The catalysed reaction is L-threonyl-[protein] + ATP = O-phospho-L-threonyl-[protein] + ADP + H(+). In Mus musculus (Mouse), this protein is Cyclin-dependent kinase-like 3.